The primary structure comprises 967 residues: Nonsense-mediated mRNA decay factor SMG8 (967 aa).

Residues 627 to 702 are disordered; that stretch reads LNEGEDADAD…SCPESQSVAS (76 aa). Acidic residues predominate over residues 628 to 639; the sequence is NEGEDADADADS. Positions 643-666 are enriched in low complexity; sequence RSQICSSGQSSRSRSNSSSSDTSS. A compositionally biased stretch (polar residues) spans 686–702; it reads ATEALSESCPESQSVAS.

It belongs to the SMG8 family.

In terms of biological role, involved in nonsense-mediated decay (NMD) of mRNAs containing premature stop codons. Probable component of kinase complex containing nonC and recruited to stalled ribosomes. This is Nonsense-mediated mRNA decay factor SMG8 from Drosophila mojavensis (Fruit fly).